Here is a 504-residue protein sequence, read N- to C-terminus: Splicing factor SF3a60 homolog (504 aa).

N-acetylserine is present on Ser-2. Disordered stretches follow at residues Asp-293 to Ala-319 and Tyr-355 to Asp-374. Over residues Glu-356–Asp-374 the composition is skewed to acidic residues. Ser-373 carries the phosphoserine modification. The Matrin-type zinc finger occupies Phe-409–Cys-440.

The protein belongs to the SF3A3 family. In terms of tissue distribution, expressed at moderate levels in all sporophytic tissues with strongest expression in gametophytes.

It localises to the nucleus. Functionally, splicing factor homolog to SF3a60 that may be involved in pre-spliceosome formation. Is necessary for gametic cell fate determination. The sequence is that of Splicing factor SF3a60 homolog from Arabidopsis thaliana (Mouse-ear cress).